The sequence spans 310 residues: AMMECR1-like protein (310 aa).

Residues 26–92 (LSGSGTHSHG…SGALSPLPRP (67 aa)) are disordered. 2 stretches are compositionally biased toward polar residues: residues 28-66 (GSGTHSHGNQSTTVPGSSSGPLQNHQHVDNSSGRENVSD) and 74-84 (SPITRMNTASG). Residue Ser-74 is modified to Phosphoserine. Residues 97-291 (NSTKNLVVTA…ISYAEYIASR (195 aa)) form the AMMECR1 domain.

The chain is AMMECR1-like protein (Ammecr1l) from Mus musculus (Mouse).